The primary structure comprises 192 residues: ADP-ribosylation factor-like protein 4C (192 aa).

G2 carries the N-myristoyl glycine lipid modification. GTP contacts are provided by residues 20-27 (GLDSAGKT), 68-72 (DVGGQ), and 127-130 (NKQD).

This sequence belongs to the small GTPase superfamily. Arf family. As to quaternary structure, interacts with CYTH2. Interacts with alpha tubulin; interaction is independent on the ARL4C GTP or GDP binding status. Expressed in several tumor cell lines (at protein level). Expressed in lung, brain, leukocytes and placenta.

It is found in the cell projection. The protein resides in the filopodium. Its subcellular location is the cell membrane. It localises to the cytoplasm. Small GTP-binding protein which cycles between an inactive GDP-bound and an active GTP-bound form, and the rate of cycling is regulated by guanine nucleotide exchange factors (GEF) and GTPase-activating proteins (GAP). GTP-binding protein that does not act as an allosteric activator of the cholera toxin catalytic subunit. May be involved in transport between a perinuclear compartment and the plasma membrane, apparently linked to the ABCA1-mediated cholesterol secretion pathway. Recruits CYTH1, CYTH2, CYTH3 and CYTH4 to the plasma membrane in the GDP-bound form. Regulates the microtubule-dependent intracellular vesicular transport from early endosome to recycling endosome process. The sequence is that of ADP-ribosylation factor-like protein 4C (ARL4C) from Homo sapiens (Human).